Reading from the N-terminus, the 635-residue chain is Threonine--tRNA ligase (635 aa).

Residues 1–61 (MINIKFPDGS…NHDCELRLIT (61 aa)) form the TGS domain. Residues 242-533 (DHRKIGKALD…LIEHYAGNMP (292 aa)) are catalytic. Residues Cys-333, His-384, and His-510 each contribute to the Zn(2+) site.

The protein belongs to the class-II aminoacyl-tRNA synthetase family. As to quaternary structure, homodimer. Requires Zn(2+) as cofactor.

It localises to the cytoplasm. It catalyses the reaction tRNA(Thr) + L-threonine + ATP = L-threonyl-tRNA(Thr) + AMP + diphosphate + H(+). Its function is as follows. Catalyzes the attachment of threonine to tRNA(Thr) in a two-step reaction: L-threonine is first activated by ATP to form Thr-AMP and then transferred to the acceptor end of tRNA(Thr). Also edits incorrectly charged L-seryl-tRNA(Thr). The chain is Threonine--tRNA ligase from Francisella philomiragia subsp. philomiragia (strain ATCC 25017 / CCUG 19701 / FSC 153 / O#319-036).